We begin with the raw amino-acid sequence, 358 residues long: Probable (S)-tetrahydroprotoberberine N-methyltransferase 2 (358 aa).

Residues Ser-98, Gly-136, Asn-160, Gln-164, Asp-186, Val-187, and Ile-202 each contribute to the S-adenosyl-L-methionine site. Residue Cys-333 is part of the active site.

It belongs to the CFA/CMAS family. As to quaternary structure, homodimer.

It localises to the cytoplasm. It catalyses the reaction (S)-stylopine + S-adenosyl-L-methionine = (S)-cis-N-methylstylopine + S-adenosyl-L-homocysteine. The enzyme catalyses (S)-tetrahydropalmatine + S-adenosyl-L-methionine = (S)-cis-N-methyltetrahydropalmatine + S-adenosyl-L-homocysteine. It functions in the pathway alkaloid biosynthesis. Functionally, N-methyltransferase with a strict substrate specificity for (R,S)-tetrahydropalmatine or (R,S)-stylopine. This is Probable (S)-tetrahydroprotoberberine N-methyltransferase 2 from Papaver bracteatum (Great scarlet poppy).